We begin with the raw amino-acid sequence, 246 residues long: MATDVTETPAPLVDAAPEAPADAPAAPAADANAAKAKKATAPKKRASPTHLPYAEMVSEAITSLKERTGSSSYAIAKFVEDKHKAKLPPNFRKLLNVQLKKLVAGGKLTKVKNSYKLSSATKPNPKPKAAPKKPKTGAKKPKAAAKPKAKTPAKAKPATKPKPAAKPKAVVKPKTPAKPKAKPAAKAKPKTAGAKPKPLAKKAGRAKAAKTSAKDTPGKKAPAKKAAPSKKAATPVRKAPSRKAKK.

Disordered regions lie at residues M1–L51 and G105–K246. A compositionally biased stretch (low complexity) spans P9–A34. Residues K35 to S47 are compositionally biased toward basic residues. The H15 domain occupies T49–S119. Basic residues-rich tracts occupy residues A129 to P189 and P198 to A208. Low complexity predominate over residues K224–P235.

It belongs to the histone H1/H5 family.

Its subcellular location is the nucleus. The protein resides in the chromosome. In terms of biological role, histones H1 are necessary for the condensation of nucleosome chains into higher-order structures. This Zea mays (Maize) protein is Histone H1.